A 446-amino-acid polypeptide reads, in one-letter code: Glycerol-3-phosphate acyltransferase 3 (446 aa).

3 helical membrane-spanning segments follow: residues 25-45, 142-162, and 164-184; these read LPSA…VLVK, LRLT…LLPL, and FTLA…VGQL. The HXXXXD motif signature appears at 232–237; the sequence is HTSPID. Residues 352–372 traverse the membrane as a helical segment; the sequence is IVSYLLRIMTSWAIVCHVWYM. A disordered region spans residues 418-446; sequence FKEEQQKNYSKMLVRNGSQGNLPAGTESD.

It belongs to the 1-acyl-sn-glycerol-3-phosphate acyltransferase family.

The protein localises to the endoplasmic reticulum membrane. It catalyses the reaction sn-glycerol 3-phosphate + an acyl-CoA = a 1-acyl-sn-glycero-3-phosphate + CoA. The catalysed reaction is a 1-acyl-sn-glycero-3-phosphate + an acyl-CoA = a 1,2-diacyl-sn-glycero-3-phosphate + CoA. It carries out the reaction dodecanoyl-CoA + sn-glycerol 3-phosphate = 1-dodecanoyl-sn-glycerol 3-phosphate + CoA. The enzyme catalyses sn-glycerol 3-phosphate + hexadecanoyl-CoA = 1-hexadecanoyl-sn-glycero-3-phosphate + CoA. It catalyses the reaction sn-glycerol 3-phosphate + (9Z)-octadecenoyl-CoA = 1-(9Z-octadecenoyl)-sn-glycero-3-phosphate + CoA. The catalysed reaction is (9Z,12Z)-octadecadienoyl-CoA + sn-glycerol 3-phosphate = 1-(9Z,12Z)-octadecadienoyl-sn-glycero-3-phosphate + CoA. It carries out the reaction 1-tetradecanoyl-sn-glycerol 3-phosphate + (9Z)-octadecenoyl-CoA = 1-tetradecanoyl-2-(9Z)-octadecenoyl-sn-glycero-3-phosphate + CoA. The enzyme catalyses 1-hexadecanoyl-sn-glycero-3-phosphate + (9Z)-octadecenoyl-CoA = 1-hexadecanoyl-2-(9Z-octadecenoyl)-sn-glycero-3-phosphate + CoA. It catalyses the reaction 1-(9Z-octadecenoyl)-sn-glycero-3-phosphate + (9Z)-octadecenoyl-CoA = 1,2-di-(9Z-octadecenoyl)-sn-glycero-3-phosphate + CoA. The catalysed reaction is 1-(6Z,9Z,12Z-octadecatrienoyl)-sn-glycero-3-phosphate + (9Z)-octadecenoyl-CoA = (6Z,9Z,12Z)-octadecatrienoyl-2-(9Z)-octadecenoyl-sn-glycero-3-phosphate + CoA. It carries out the reaction 1-(9Z,12Z,15Z)-octadecatrienoyl-sn-glycero-3-phosphate + (9Z)-octadecenoyl-CoA = 1-(9Z,12Z,15Z)-octadecatrienoyl-2-(9Z)-octadecenoyl-sn-glycero-3-phosphate + CoA. The enzyme catalyses 1-(9Z-octadecenoyl)-sn-glycero-3-phosphate + tetradecanoyl-CoA = 1-(9Z)-octadecenoyl-2-tetradecanoyl-sn-glycero-3-phosphate + CoA. It catalyses the reaction 1-(9Z-octadecenoyl)-sn-glycero-3-phosphate + hexadecanoyl-CoA = 1-(9Z)-octadecenoyl-2-hexadecanoyl-sn-glycero-3-phosphate + CoA. The catalysed reaction is 1-(9Z-octadecenoyl)-sn-glycero-3-phosphate + octadecanoyl-CoA = 1-(9Z-octadecenoyl)-2-octadecanoyl-sn-glycero-3-phosphate + CoA. It carries out the reaction 1-(9Z-octadecenoyl)-sn-glycero-3-phosphate + (9Z,12Z)-octadecadienoyl-CoA = 1-(9Z)-octadecenoyl-2-(9Z,12Z)-octadecadienoyl-sn-glycero-3-phosphate + CoA. The enzyme catalyses 1-(5Z,8Z,11Z,14Z-eicosatetraenoyl)-sn-glycero-3-phosphate + (9Z)-octadecenoyl-CoA = 1-(5Z,8Z,11Z,14Z)-eicosatetraenoyl-2-(9Z)-octadecenoyl-sn-glycero-3-phosphate + CoA. It functions in the pathway glycerolipid metabolism; triacylglycerol biosynthesis. The protein operates within phospholipid metabolism; CDP-diacylglycerol biosynthesis; CDP-diacylglycerol from sn-glycerol 3-phosphate: step 1/3. In terms of biological role, converts glycerol-3-phosphate to 1-acyl-sn-glycerol-3-phosphate (lysophosphatidic acid or LPA) by incorporating an acyl moiety at the sn-1 position of the glycerol backbone. Also converts LPA into 1,2-diacyl-sn-glycerol-3-phosphate (phosphatidic acid or PA) by incorporating an acyl moiety at the sn-2 position of the glycerol backbone. Protects cells against lipotoxicity. The polypeptide is Glycerol-3-phosphate acyltransferase 3 (Gallus gallus (Chicken)).